A 298-amino-acid chain; its full sequence is Ribosomal RNA small subunit methyltransferase A (298 aa).

N35, L37, G62, E83, D108, and N133 together coordinate S-adenosyl-L-methionine.

This sequence belongs to the class I-like SAM-binding methyltransferase superfamily. rRNA adenine N(6)-methyltransferase family. RsmA subfamily.

The protein resides in the cytoplasm. It carries out the reaction adenosine(1518)/adenosine(1519) in 16S rRNA + 4 S-adenosyl-L-methionine = N(6)-dimethyladenosine(1518)/N(6)-dimethyladenosine(1519) in 16S rRNA + 4 S-adenosyl-L-homocysteine + 4 H(+). Functionally, specifically dimethylates two adjacent adenosines (A1518 and A1519) in the loop of a conserved hairpin near the 3'-end of 16S rRNA in the 30S particle. May play a critical role in biogenesis of 30S subunits. This chain is Ribosomal RNA small subunit methyltransferase A, found in Streptococcus pyogenes serotype M2 (strain MGAS10270).